The primary structure comprises 290 residues: Alpha-mannosidase (290 aa).

D17 functions as the Nucleophile in the catalytic mechanism. A glycan (N-linked (GlcNAc...) asparagine) is linked at N64.

This sequence belongs to the glycosyl hydrolase 38 family. Dimer. The cofactor is Zn(2+).

The enzyme catalyses Hydrolysis of terminal, non-reducing alpha-D-mannose residues in alpha-D-mannosides.. Inhibited by swainsonine but not by 1-desoxymannojirimycin. In terms of biological role, liberates mannose from p-nitrophenyl-alpha-D-mannoside. This is Alpha-mannosidase from Lablab purpureus (Hyacinth bean).